Here is a 253-residue protein sequence, read N- to C-terminus: Ubiquinone/menaquinone biosynthesis C-methyltransferase UbiE (253 aa).

S-adenosyl-L-methionine contacts are provided by residues Thr76, Asp97, and 125–126; that span reads NA.

Belongs to the class I-like SAM-binding methyltransferase superfamily. MenG/UbiE family.

The catalysed reaction is a 2-demethylmenaquinol + S-adenosyl-L-methionine = a menaquinol + S-adenosyl-L-homocysteine + H(+). It catalyses the reaction a 2-methoxy-6-(all-trans-polyprenyl)benzene-1,4-diol + S-adenosyl-L-methionine = a 5-methoxy-2-methyl-3-(all-trans-polyprenyl)benzene-1,4-diol + S-adenosyl-L-homocysteine + H(+). It functions in the pathway quinol/quinone metabolism; menaquinone biosynthesis; menaquinol from 1,4-dihydroxy-2-naphthoate: step 2/2. Its pathway is cofactor biosynthesis; ubiquinone biosynthesis. Methyltransferase required for the conversion of demethylmenaquinol (DMKH2) to menaquinol (MKH2) and the conversion of 2-polyprenyl-6-methoxy-1,4-benzoquinol (DDMQH2) to 2-polyprenyl-3-methyl-6-methoxy-1,4-benzoquinol (DMQH2). This Bradyrhizobium diazoefficiens (strain JCM 10833 / BCRC 13528 / IAM 13628 / NBRC 14792 / USDA 110) protein is Ubiquinone/menaquinone biosynthesis C-methyltransferase UbiE.